The following is a 312-amino-acid chain: Methionyl-tRNA formyltransferase (312 aa).

(6S)-5,6,7,8-tetrahydrofolate is bound at residue 117 to 120; that stretch reads SLLP.

Belongs to the Fmt family.

The enzyme catalyses L-methionyl-tRNA(fMet) + (6R)-10-formyltetrahydrofolate = N-formyl-L-methionyl-tRNA(fMet) + (6S)-5,6,7,8-tetrahydrofolate + H(+). In terms of biological role, attaches a formyl group to the free amino group of methionyl-tRNA(fMet). The formyl group appears to play a dual role in the initiator identity of N-formylmethionyl-tRNA by promoting its recognition by IF2 and preventing the misappropriation of this tRNA by the elongation apparatus. The protein is Methionyl-tRNA formyltransferase of Bordetella pertussis (strain Tohama I / ATCC BAA-589 / NCTC 13251).